Here is an 802-residue protein sequence, read N- to C-terminus: Mitochondrial inner membrane m-AAA protease component AFG3L2 (802 aa).

Residues 1–38 (MAHRCLLLWSRGGCRRGLPPLLVPRGCLGPDRRPCLRT) constitute a mitochondrion transit peptide. A propeptide spans 39–66 (LYQYATVQTASSRRSLLRDVIAAYQRFC) (removed in mature form). Positions 76–124 (YFPNGKNGKKASEPKEAVGEKKEPQPSGPQPSGGAGGGGGKRRGKKEDS) are disordered. Basic and acidic residues predominate over residues 85 to 99 (KASEPKEAVGEKKEP). N6-succinyllysine is present on Lys-116. The next 2 helical transmembrane spans lie at 142-162 (FRMY…YFVF) and 250-270 (GSFL…LYTI). ATP contacts are provided by Val-309, Ala-310, Thr-351, Gly-352, Lys-353, Thr-354, Leu-355, and His-489. His-573 contributes to the Zn(2+) binding site. Residue Glu-574 is part of the active site. Zn(2+)-binding residues include His-577 and Asp-648. Residues 759–802 (VEGTGSLDEDTSLPEGLQDWNKEREKEEKKEKEKEEPLNEKVVS) are disordered. The span at 778–802 (WNKEREKEEKKEKEKEEPLNEKVVS) shows a compositional bias: basic and acidic residues.

This sequence in the N-terminal section; belongs to the AAA ATPase family. In the C-terminal section; belongs to the peptidase M41 family. In terms of assembly, homohexamer. Forms heterohexamers with SPG7 and AFG3L1. The m-AAA protease is either composed of homohexamers of AFG3L2 or heterohexamers of AFG3L1, AFG3L2 and/or SPG7. Interacts with MAIP1. Interacts with DNAJC19. Interacts with PHB2. Zn(2+) is required as a cofactor. In terms of processing, upon import into the mitochondrion, the N-terminal transit peptide is cleaved to generate an intermediate form which undergoes autocatalytic proteolytic processing to generate the proteolytically active mature form. In terms of tissue distribution, highly expressed in the cerebellar Purkinje cells.

It localises to the mitochondrion inner membrane. It catalyses the reaction ATP + H2O = ADP + phosphate + H(+). In terms of biological role, catalytic component of the m-AAA protease, a protease that plays a key role in proteostasis of inner mitochondrial membrane proteins, and which is essential for axonal and neuron development. AFG3L2 possesses both ATPase and protease activities: the ATPase activity is required to unfold substrates, threading them into the internal proteolytic cavity for hydrolysis into small peptide fragments. The m-AAA protease carries out protein quality control in the inner membrane of the mitochondria by mediating degradation of mistranslated or misfolded polypeptides. The m-AAA protease complex also promotes the processing and maturation of mitochondrial proteins, such as MRPL32/bL32m, PINK1 and SP7. Mediates protein maturation of the mitochondrial ribosomal subunit MRPL32/bL32m by catalyzing the cleavage of the presequence of MRPL32/bL32m prior to assembly into the mitochondrial ribosome. Required for SPG7 maturation into its active mature form after SPG7 cleavage by mitochondrial-processing peptidase (MPP). Required for the maturation of PINK1 into its 52kDa mature form after its cleavage by mitochondrial-processing peptidase (MPP). Acts as a regulator of calcium in neurons by mediating degradation of SMDT1/EMRE before its assembly with the uniporter complex, limiting the availability of SMDT1/EMRE for MCU assembly and promoting efficient assembly of gatekeeper subunits with MCU. Promotes the proteolytic degradation of GHITM upon hyperpolarization of mitochondria: progressive GHITM degradation leads to respiratory complex I degradation and broad reshaping of the mitochondrial proteome by AFG3L2. Also acts as a regulator of mitochondrial glutathione homeostasis by mediating cleavage and degradation of SLC25A39. SLC25A39 cleavage is prevented when SLC25A39 binds iron-sulfur. Involved in the regulation of OMA1-dependent processing of OPA1. May act by mediating processing of OMA1 precursor, participating in OMA1 maturation. The sequence is that of Mitochondrial inner membrane m-AAA protease component AFG3L2 from Mus musculus (Mouse).